A 405-amino-acid polypeptide reads, in one-letter code: Argininosuccinate synthase (405 aa).

Residues Ala11–Ser19 and Ala38 contribute to the ATP site. The L-citrulline site is built by Tyr91 and Ser96. Position 121 (Gly121) interacts with ATP. Residues Thr123, Asn127, and Asp128 each contribute to the L-aspartate site. Asn127 contacts L-citrulline. L-citrulline-binding residues include Arg131, Ser181, Ser190, Glu266, and Tyr278.

This sequence belongs to the argininosuccinate synthase family. Type 1 subfamily. In terms of assembly, homotetramer.

It is found in the cytoplasm. It catalyses the reaction L-citrulline + L-aspartate + ATP = 2-(N(omega)-L-arginino)succinate + AMP + diphosphate + H(+). The protein operates within amino-acid biosynthesis; L-arginine biosynthesis; L-arginine from L-ornithine and carbamoyl phosphate: step 2/3. This chain is Argininosuccinate synthase, found in Nitratiruptor sp. (strain SB155-2).